The primary structure comprises 965 residues: Pullulanase 1, chloroplastic (965 aa).

The N-terminal 62 residues, 1–62 (MALTLTPTSS…SKTSLHCLCS (62 aa)), are a transit peptide targeting the chloroplast. D552 (nucleophile) is an active-site residue. Catalysis depends on E589, which acts as the Proton donor.

Belongs to the glycosyl hydrolase 13 family.

It is found in the plastid. The protein localises to the chloroplast stroma. The enzyme catalyses Hydrolysis of (1-&gt;6)-alpha-D-glucosidic linkages in alpha- and beta-limit dextrins of amylopectin and glycogen, and in amylopectin and pullulan.. The protein operates within glycan biosynthesis; starch biosynthesis. Its pathway is glycan degradation; starch degradation. Its function is as follows. Involved in starch degradation and also probably in the trimming of pre-amylopectin chains during starch synthesis. This chain is Pullulanase 1, chloroplastic (PU1), found in Arabidopsis thaliana (Mouse-ear cress).